The sequence spans 185 residues: MELTRYEIIKILMEYVTDEIVVCNIGIPSKELFKINDREKNFYMLGSMGLSSSIGHGLALSVNEKVIAIDGDGSVLMNMGSLATIGKTTPKDFLLLIVDNCAYGSTGNQETHSTCTDLYQVSKACGIDSIGVFNEEQLRDAVKLALSESGTKVIVAKARPHNENVPNINLVPTEIKHRFMNAIKK.

This sequence belongs to the TPP enzyme family. In terms of assembly, heterododecamer composed of 6 subunits alpha and 6 subunits beta. It depends on thiamine diphosphate as a cofactor.

The catalysed reaction is 3-sulfopyruvate + H(+) = sulfoacetaldehyde + CO2. It participates in cofactor biosynthesis; coenzyme M biosynthesis; sulfoacetaldehyde from phosphoenolpyruvate and sulfite: step 4/4. In terms of biological role, involved in the biosynthesis of the coenzyme M (2-mercaptoethanesulfonic acid). Catalyzes the decarboxylation of sulfopyruvate to sulfoacetaldehyde. The polypeptide is Sulfopyruvate decarboxylase subunit beta (Methanococcus maripaludis (strain DSM 14266 / JCM 13030 / NBRC 101832 / S2 / LL)).